The primary structure comprises 91 residues: Peptide Ctry2146 (91 aa).

The signal sequence occupies residues 1-23; the sequence is MKTQTLLVTFLVVLLMVATQTEA. The residue at position 33 (Leu33) is a Leucine amide. The propeptide occupies 37–91; it reads GLLDGLLGKRGLLFGKRGPLFGKRALTNQDFLDFAYDPSLSAADMDALEMLFEDY.

The protein belongs to the non-disulfide-bridged peptide (NDBP) superfamily. Short antimicrobial peptide (group 4) family. Expressed by the venom gland.

It localises to the secreted. Its subcellular location is the target cell membrane. Functionally, antimicrobial peptide. The polypeptide is Peptide Ctry2146 (Chaerilus tryznai (Scorpion)).